Consider the following 501-residue polypeptide: ATP synthase subunit alpha (501 aa).

169-176 is a binding site for ATP; that stretch reads GDRQTGKT.

This sequence belongs to the ATPase alpha/beta chains family. As to quaternary structure, F-type ATPases have 2 components, CF(1) - the catalytic core - and CF(0) - the membrane proton channel. CF(1) has five subunits: alpha(3), beta(3), gamma(1), delta(1), epsilon(1). CF(0) has three main subunits: a(1), b(2) and c(9-12). The alpha and beta chains form an alternating ring which encloses part of the gamma chain. CF(1) is attached to CF(0) by a central stalk formed by the gamma and epsilon chains, while a peripheral stalk is formed by the delta and b chains.

Its subcellular location is the cell membrane. The enzyme catalyses ATP + H2O + 4 H(+)(in) = ADP + phosphate + 5 H(+)(out). In terms of biological role, produces ATP from ADP in the presence of a proton gradient across the membrane. The alpha chain is a regulatory subunit. The polypeptide is ATP synthase subunit alpha (Desulforamulus reducens (strain ATCC BAA-1160 / DSM 100696 / MI-1) (Desulfotomaculum reducens)).